The following is an 878-amino-acid chain: Aminopeptidase M1-C (878 aa).

The required for membrane association stretch occupies residues 102-209 (LGEGVLAMDF…MSTYLVAIVV (108 aa)). Substrate is bound by residues E142 and 275–279 (GAMEN). H311 is a Zn(2+) binding site. E312 functions as the Proton acceptor in the catalytic mechanism. Positions 315 and 334 each coordinate Zn(2+). Residues 726 to 727 (LL) carry the Dileucine internalization motif motif.

Belongs to the peptidase M1 family. As to quaternary structure, homodimer. Zn(2+) serves as cofactor.

The protein localises to the membrane. Its subcellular location is the microsome membrane. It localises to the cytoplasm. It catalyses the reaction Release of an N-terminal amino acid, Xaa-|-Yaa- from a peptide, amide or arylamide. Xaa is preferably Ala, but may be most amino acids including Pro (slow action). When a terminal hydrophobic residue is followed by a prolyl residue, the two may be released as an intact Xaa-Pro dipeptide.. The chain is Aminopeptidase M1-C from Oryza sativa subsp. japonica (Rice).